Reading from the N-terminus, the 439-residue chain is Trigger factor (439 aa).

The PPIase FKBP-type domain maps to 158-233 (GDVINIEYTI…IKEVLKRTLM (76 aa)). Positions 410–439 (KEISADEPVEEQKEEEEKEEAGSENSENKE) are disordered. A compositionally biased stretch (acidic residues) spans 414–428 (ADEPVEEQKEEEEKE).

The protein belongs to the FKBP-type PPIase family. Tig subfamily.

It localises to the cytoplasm. It catalyses the reaction [protein]-peptidylproline (omega=180) = [protein]-peptidylproline (omega=0). Involved in protein export. Acts as a chaperone by maintaining the newly synthesized protein in an open conformation. Functions as a peptidyl-prolyl cis-trans isomerase. The polypeptide is Trigger factor (Kosmotoga olearia (strain ATCC BAA-1733 / DSM 21960 / TBF 19.5.1)).